A 510-amino-acid polypeptide reads, in one-letter code: NAD(P)H-quinone oxidoreductase subunit 2 B, chloroplastic (510 aa).

13 helical membrane-spanning segments follow: residues leucine 24–leucine 44, isoleucine 57–phenylalanine 77, isoleucine 99–isoleucine 119, methionine 124–cysteine 144, isoleucine 150–threonine 170, tyrosine 183–glycine 203, proline 227–alanine 247, tryptophan 295–isoleucine 315, methionine 323–aspartate 343, glycine 347–alanine 367, alanine 395–phenylalanine 415, leucine 418–leucine 438, and methionine 484–isoleucine 504.

It belongs to the complex I subunit 2 family. In terms of assembly, NDH is composed of at least 16 different subunits, 5 of which are encoded in the nucleus.

Its subcellular location is the plastid. It is found in the chloroplast thylakoid membrane. It catalyses the reaction a plastoquinone + NADH + (n+1) H(+)(in) = a plastoquinol + NAD(+) + n H(+)(out). The catalysed reaction is a plastoquinone + NADPH + (n+1) H(+)(in) = a plastoquinol + NADP(+) + n H(+)(out). In terms of biological role, NDH shuttles electrons from NAD(P)H:plastoquinone, via FMN and iron-sulfur (Fe-S) centers, to quinones in the photosynthetic chain and possibly in a chloroplast respiratory chain. The immediate electron acceptor for the enzyme in this species is believed to be plastoquinone. Couples the redox reaction to proton translocation, and thus conserves the redox energy in a proton gradient. The polypeptide is NAD(P)H-quinone oxidoreductase subunit 2 B, chloroplastic (Liriodendron tulipifera (Tuliptree)).